The sequence spans 91 residues: Mercuric transport protein periplasmic component (91 aa).

The first 19 residues, 1–19 (MKKLFASLAIAAVVAPVWA), serve as a signal peptide directing secretion. Residues 22–88 (QTVTLSVPGM…ATEDAGYPSS (67 aa)) form the HMA domain. The Hg(2+) site is built by cysteine 33 and cysteine 36.

The protein belongs to the MerP family. In terms of assembly, monomer.

The protein resides in the periplasm. Functionally, involved in mercury resistance. Acts as a mercury scavenger that specifically binds to a mercuric ion in the periplasm and probably passes it to the cytoplasmic mercuric reductase MerA via the mercuric transport protein MerT. This is Mercuric transport protein periplasmic component from Serratia marcescens.